The sequence spans 993 residues: Protein translocase subunit SecA (993 aa).

Residues Gln-102, 120–124 (GEGKT), and Asp-523 each bind ATP. The interval 910–962 (ENAPEPQISGGNGQQPPQRRQQTSLDDLEKQFERKKKRELEQARMAGGGMPDA) is disordered. A compositionally biased stretch (basic and acidic residues) spans 936-951 (DLEKQFERKKKRELEQ). The Zn(2+) site is built by Cys-979, Cys-981, Cys-990, and His-991.

It belongs to the SecA family. Monomer and homodimer. Part of the essential Sec protein translocation apparatus which comprises SecA, SecYEG and auxiliary proteins SecDF. Other proteins may also be involved. It depends on Zn(2+) as a cofactor.

It localises to the cell inner membrane. Its subcellular location is the cytoplasm. It carries out the reaction ATP + H2O + cellular proteinSide 1 = ADP + phosphate + cellular proteinSide 2.. In terms of biological role, part of the Sec protein translocase complex. Interacts with the SecYEG preprotein conducting channel. Has a central role in coupling the hydrolysis of ATP to the transfer of proteins into and across the cell membrane, serving as an ATP-driven molecular motor driving the stepwise translocation of polypeptide chains across the membrane. The sequence is that of Protein translocase subunit SecA from Koribacter versatilis (strain Ellin345).